Here is a 644-residue protein sequence, read N- to C-terminus: MKLITILFLCSRLLLSLTQESQSEEIDCNDKDLFKAVDAALKKYNSQNQSNNQFVLYRITEATKTVGSDTFYSFKYEIKEGDCPVQSGKTWQDCEYKDAAKAATGECTATVGKRSSTKFSVATQTCQITPAEGPVVTAQYDCLGCVHPISTQSPDLEPILRHGIQYFNNNTQHSSLFMLNEVKRAQRQVVAGLNFRITYSIVQTNCSKENFLFLTPDCKSLWNGDTGECTDNAYIDIQLRIASFSQNCDIYPGKDFVQPPTKICVGCPRDIPTNSPELEETLTHTITKLNAENNATFYFKIDNVKKARVQVVAGKKYFIDFVARETTCSKESNEELTESCETKKLGQSLDCNAEVYVVPWEKKIYPTVNCQPLGMISLMKRPPGFSPFRSSRIGEIKEETTVSPPHTSMAPAQDEERDSGKEQGHTRRHDWGHEKQRKHNLGHGHKHERDQGHGHQRGHGLGHGHEQQHGLGHGHKFKLDDDLEHQGGHVLDHGHKHKHGHGHGKHKNKGKKNGKHNGWKTEHLASSSEDSTTPSAQTQEKTEGPTPIPSLAKPGVTVTFSDFQDSDLIATMMPPISPAPIQSDDDWIPDIQIDPNGLSFNPISDFPDTTSPKCPGRPWKSVSEINPTTQMKESYYFDLTDGLS.

An N-terminal signal peptide occupies residues 1-18 (MKLITILFLCSRLLLSLT). A Pyrrolidone carboxylic acid; in mature form modification is found at glutamine 19. Residues 28–132 (CNDKDLFKAV…TQTCQITPAE (105 aa)) form the Cystatin kininogen-type 1 domain. Cystine bridges form between cysteine 28/cysteine 614, cysteine 83/cysteine 94, cysteine 107/cysteine 126, cysteine 142/cysteine 145, cysteine 206/cysteine 218, cysteine 229/cysteine 248, cysteine 264/cysteine 267, cysteine 328/cysteine 340, and cysteine 351/cysteine 370. N-linked (GlcNAc...) (complex) asparagine glycosylation is present at asparagine 48. The O-glycosylated at one site only stretch occupies residues 120-153 (SVATQTCQITPAEGPVVTAQYDCLGCVHPISTQS). Positions 151–254 (TQSPDLEPIL…SQNCDIYPGK (104 aa)) constitute a Cystatin kininogen-type 2 domain. Residue asparagine 169 is glycosylated (N-linked (GlcNAc...) asparagine). Asparagine 205 carries an N-linked (GlcNAc...) (complex) asparagine glycan. The 104-residue stretch at 273–376 (TNSPELEETL…TVNCQPLGMI (104 aa)) folds into the Cystatin kininogen-type 3 domain. A glycan (N-linked (GlcNAc...) (complex) asparagine) is linked at asparagine 294. The residue at position 332 (serine 332) is a Phosphoserine; by FAM20C. The residue at position 383 (proline 383) is a 4-hydroxyproline; partial. The disordered stretch occupies residues 387–555 (PFRSSRIGEI…TPIPSLAKPG (169 aa)). Threonine 401 carries an O-linked (GalNAc...) threonine glycan. The span at 418-434 (DSGKEQGHTRRHDWGHE) shows a compositional bias: basic and acidic residues. 3 repeats span residues 420 to 449 (GKEQGHTRRHDWGHEKQRKHNLGHGHKHER), 450 to 479 (DQGHGHQRGHGLGHGHEQQHGLGHGHKFKL), and 480 to 510 (DDDLEHQGGHVLDHGHKHKHGHGHGKHKNKG). Basic residues predominate over residues 435 to 446 (KQRKHNLGHGHK). The span at 477 to 493 (FKLDDDLEHQGGHVLDH) shows a compositional bias: basic and acidic residues. Positions 494–518 (GHKHKHGHGHGKHKNKGKKNGKHNG) are enriched in basic residues. A compositionally biased stretch (polar residues) spans 524–539 (LASSSEDSTTPSAQTQ). O-linked (GalNAc...) threonine glycans are attached at residues threonine 533, threonine 542, threonine 546, threonine 557, and threonine 571. An O-linked (GalNAc...) serine glycan is attached at serine 577. A glycan (O-linked (GalNAc...) threonine) is linked at threonine 628.

Interacts (high molecular weight kininogen) (via amino acids 402-532) with triafestin-1 and triafestin-2, anticoagulant proteins from Triatoma infestans. Interacts (high molecular weight kininogen) (via amino acids 402-532) with short form salivary protein D7R1, an anticoagulant protein from Anopheles stephensi. Interacts (high molecular weight kininogen) (via amino acids 421-466 and 459-513) with haemaphysalin, an anticoagulant protein from Haemaphysalis longicornis. In terms of processing, bradykinin is inactivated by ACE, which removes the dipeptide Arg-Phe from its C-terminus. Post-translationally, bradykinin is released from kininogen by plasma kallikrein. Hydroxylation of Pro-383 occurs prior to the release of bradykinin. In terms of processing, phosphorylated by FAM20C in the extracellular medium. Post-translationally, N- and O-glycosylated. O-glycosylated with core 1 or possibly core 8 glycans. (Microbial infection) Bradykinin is generated upon proteolytic cleavage by S.pyogenes SpeB to produce hypotension during septic shock. Secreted in plasma. T-kinin is detected in malignant ovarian, colon and breast carcinomas, but not in benign tumors.

It localises to the secreted. Its subcellular location is the extracellular space. Kininogens are inhibitors of thiol proteases. HMW-kininogen plays an important role in blood coagulation by helping to position optimally prekallikrein and factor XI next to factor XII; HMW-kininogen inhibits the thrombin- and plasmin-induced aggregation of thrombocytes. LMW-kininogen inhibits the aggregation of thrombocytes. LMW-kininogen is in contrast to HMW-kininogen not involved in blood clotting. Its function is as follows. The active peptide bradykinin is a potent vasodilatator that is released from HMW-kininogen shows a variety of physiological effects: (A) influence in smooth muscle contraction, (B) induction of hypotension, (C) natriuresis and diuresis, (D) decrease in blood glucose level, (E) it is a mediator of inflammation and causes (E1) increase in vascular permeability, (E2) stimulation of nociceptors (4E3) release of other mediators of inflammation (e.g. prostaglandins), (F) it has a cardioprotective effect (directly via bradykinin action, indirectly via endothelium-derived relaxing factor action). This is Kininogen-1 (KNG1) from Homo sapiens (Human).